A 560-amino-acid polypeptide reads, in one-letter code: Portal protein (560 aa).

Residues 526–560 (KVQADETGNYSGSDVSPLKFKPETLPFSGSTDDSI) form a disordered region.

It belongs to the Tevenvirinae portal protein family. In terms of assembly, homododecamer. Interacts with the large terminase subunit. Interacts with the major capsid protein. Interacts with the capsid vertex protein.

Its subcellular location is the virion. Its function is as follows. Forms the portal vertex of the capsid. This portal plays critical roles in head assembly, genome packaging, neck/tail attachment, and genome ejection. The portal protein multimerizes as a single ring-shaped homododecamer arranged around a central channel. Binds to the terminase subunits to form the packaging machine. The sequence is that of Portal protein from Salmonella typhi.